The following is a 416-amino-acid chain: Gamma-glutamyl phosphate reductase (416 aa).

It belongs to the gamma-glutamyl phosphate reductase family.

The protein localises to the cytoplasm. It catalyses the reaction L-glutamate 5-semialdehyde + phosphate + NADP(+) = L-glutamyl 5-phosphate + NADPH + H(+). It functions in the pathway amino-acid biosynthesis; L-proline biosynthesis; L-glutamate 5-semialdehyde from L-glutamate: step 2/2. Its function is as follows. Catalyzes the NADPH-dependent reduction of L-glutamate 5-phosphate into L-glutamate 5-semialdehyde and phosphate. The product spontaneously undergoes cyclization to form 1-pyrroline-5-carboxylate. The protein is Gamma-glutamyl phosphate reductase of Salmonella heidelberg (strain SL476).